Reading from the N-terminus, the 642-residue chain is Threonine--tRNA ligase (642 aa).

The region spanning 1–61 is the TGS domain; sequence MPVITLPDGS…DTDSELSIIT (61 aa). The catalytic stretch occupies residues 243-534; that stretch reads DHRKIGKQLD…LIEEYAGKFP (292 aa). Cys334, His385, and His511 together coordinate Zn(2+).

This sequence belongs to the class-II aminoacyl-tRNA synthetase family. In terms of assembly, homodimer. The cofactor is Zn(2+).

Its subcellular location is the cytoplasm. It catalyses the reaction tRNA(Thr) + L-threonine + ATP = L-threonyl-tRNA(Thr) + AMP + diphosphate + H(+). Functionally, catalyzes the attachment of threonine to tRNA(Thr) in a two-step reaction: L-threonine is first activated by ATP to form Thr-AMP and then transferred to the acceptor end of tRNA(Thr). Also edits incorrectly charged L-seryl-tRNA(Thr). The polypeptide is Threonine--tRNA ligase (Shewanella woodyi (strain ATCC 51908 / MS32)).